Consider the following 311-residue polypeptide: GTP cyclohydrolase MptA (311 aa).

It belongs to the GTP cyclohydrolase IV family. In terms of assembly, homodimer. Fe(2+) is required as a cofactor.

It carries out the reaction GTP + H2O = 7,8-dihydroneopterin 2',3'-cyclic phosphate + formate + diphosphate + H(+). It participates in cofactor biosynthesis; 5,6,7,8-tetrahydromethanopterin biosynthesis. Its function is as follows. Converts GTP to 7,8-dihydro-D-neopterin 2',3'-cyclic phosphate, the first intermediate in the biosynthesis of coenzyme methanopterin. This chain is GTP cyclohydrolase MptA, found in Halobacterium salinarum (strain ATCC 29341 / DSM 671 / R1).